A 124-amino-acid chain; its full sequence is Chemotaxis protein CheY1 (124 aa).

The Response regulatory domain occupies Lys2–Leu120. Residues Asp7, Asp8, Asp53, and Asn55 each contribute to the Mg(2+) site. Asp53 bears the 4-aspartylphosphate mark.

In terms of assembly, interacts (when phosphorylated) with FliM. The cofactor is Mg(2+). In terms of processing, phosphorylated by CheAY. Dephosphorylated (inactivated) by CheZ.

Its subcellular location is the cytoplasm. Functionally, chemotactic response regulator protein that modulates the rotation direction of bacterial flagellar motors. Plays an important role in the colonization and infection of Helicobacter pylori. Upon phosphorylation by CheA, interacts with the flagellar motor protein FliM to cause clockwise flagellar rotation and bacterial reversals, as opposed to straight swimming when CheY1 is not phosphorylated. The protein is Chemotaxis protein CheY1 (cheY1) of Helicobacter pylori (strain J99 / ATCC 700824) (Campylobacter pylori J99).